Consider the following 352-residue polypeptide: Probable cytosolic iron-sulfur protein assembly protein CIAO1 homolog (352 aa).

WD repeat units lie at residues 14 to 53, 63 to 102, 107 to 146, 152 to 191, 200 to 240, 268 to 306, and 319 to 352; these read GHDD…PSEQ, CHTR…WEQV, GHEN…EFEC, GHSQ…WGCA, GHES…TSTP, HHRR…LTQP, and AHGA…WWLR.

This sequence belongs to the WD repeat CIA1 family.

Essential component of the cytosolic iron-sulfur (Fe/S) protein assembly machinery. Required for the maturation of extramitochondrial Fe/S proteins. The protein is Probable cytosolic iron-sulfur protein assembly protein CIAO1 homolog of Chlamydomonas reinhardtii (Chlamydomonas smithii).